The chain runs to 627 residues: 1-deoxy-D-xylulose-5-phosphate synthase (627 aa).

Thiamine diphosphate contacts are provided by residues His-74 and 115–117 (GHA). Position 146 (Asp-146) interacts with Mg(2+). Thiamine diphosphate contacts are provided by residues 147-148 (AA), Asn-175, Phe-284, and Glu-364. Asn-175 contributes to the Mg(2+) binding site.

This sequence belongs to the transketolase family. DXPS subfamily. Homodimer. Requires Mg(2+) as cofactor. The cofactor is thiamine diphosphate.

The enzyme catalyses D-glyceraldehyde 3-phosphate + pyruvate + H(+) = 1-deoxy-D-xylulose 5-phosphate + CO2. It functions in the pathway metabolic intermediate biosynthesis; 1-deoxy-D-xylulose 5-phosphate biosynthesis; 1-deoxy-D-xylulose 5-phosphate from D-glyceraldehyde 3-phosphate and pyruvate: step 1/1. Functionally, catalyzes the acyloin condensation reaction between C atoms 2 and 3 of pyruvate and glyceraldehyde 3-phosphate to yield 1-deoxy-D-xylulose-5-phosphate (DXP). This Acidobacterium capsulatum (strain ATCC 51196 / DSM 11244 / BCRC 80197 / JCM 7670 / NBRC 15755 / NCIMB 13165 / 161) protein is 1-deoxy-D-xylulose-5-phosphate synthase.